Here is a 134-residue protein sequence, read N- to C-terminus: Profilin-3 (134 aa).

A disulfide bridge links Cys-13 with Cys-118. An Involved in PIP2 interaction motif is present at residues 84–100; the sequence is AVIRGKKGSGGITIKKT. Thr-114 bears the Phosphothreonine mark.

The protein belongs to the profilin family. In terms of assembly, occurs in many kinds of cells as a complex with monomeric actin in a 1:1 ratio. Post-translationally, phosphorylated by MAP kinases.

It localises to the cytoplasm. The protein resides in the cytoskeleton. Functionally, binds to actin and affects the structure of the cytoskeleton. At high concentrations, profilin prevents the polymerization of actin, whereas it enhances it at low concentrations. By binding to PIP2, it inhibits the formation of IP3 and DG. The polypeptide is Profilin-3 (PRO3) (Olea europaea (Common olive)).